We begin with the raw amino-acid sequence, 106 residues long: Protein translocase subunit SecE (106 aa).

Transmembrane regions (helical) follow at residues leucine 20–isoleucine 40 and isoleucine 75–valine 95.

This sequence belongs to the SecE/SEC61-gamma family. In terms of assembly, component of the Sec protein translocase complex. Heterotrimer consisting of SecY, SecE and SecG subunits. The heterotrimers can form oligomers, although 1 heterotrimer is thought to be able to translocate proteins. Interacts with the ribosome. Interacts with SecDF, and other proteins may be involved. Interacts with SecA.

It is found in the cell inner membrane. In terms of biological role, essential subunit of the Sec protein translocation channel SecYEG. Clamps together the 2 halves of SecY. May contact the channel plug during translocation. The protein is Protein translocase subunit SecE of Haemophilus influenzae (strain ATCC 51907 / DSM 11121 / KW20 / Rd).